Here is a 186-residue protein sequence, read N- to C-terminus: ADP-ribosylation factor-like protein 8A (186 aa).

The note=Mediates targeting to membranes intramembrane region spans 1–19; the sequence is MIALFNKLLDWFKALFWKE. GTP is bound by residues 29–35, 71–75, and 130–133; these read QYSGKTT, DIGGQ, and NKRD.

Belongs to the small GTPase superfamily. Arf family. In terms of assembly, interacts with PLEKHM1. When GTP-bound, interacts with RUFY3 and RUFY4, but not with RUFY1, nor RUFY2. As to expression, ubiquitously expressed.

Its subcellular location is the late endosome membrane. It is found in the lysosome membrane. It localises to the cytoplasm. The protein resides in the cytoskeleton. The protein localises to the spindle. Its subcellular location is the cell projection. It is found in the axon. It localises to the synapse. Functionally, plays a role in lysosome motility. In neurons, mediates the anterograde axonal long-range transport of presynaptic lysosome-related vesicles required for presynaptic biogenesis and synaptic function. May play a role in chromosome segregation. The protein is ADP-ribosylation factor-like protein 8A (ARL8A) of Homo sapiens (Human).